The sequence spans 328 residues: Pantothenate kinase (328 aa).

Residues 1–12 (MAAPLNAQTRAP) are compositionally biased toward polar residues. Residues 1 to 22 (MAAPLNAQTRAPQATGRAPDFS) form a disordered region. Position 113–120 (113–120 (GSVAVGKS)) interacts with ATP.

Belongs to the prokaryotic pantothenate kinase family.

It localises to the cytoplasm. It catalyses the reaction (R)-pantothenate + ATP = (R)-4'-phosphopantothenate + ADP + H(+). Its pathway is cofactor biosynthesis; coenzyme A biosynthesis; CoA from (R)-pantothenate: step 1/5. This is Pantothenate kinase from Corynebacterium efficiens (strain DSM 44549 / YS-314 / AJ 12310 / JCM 11189 / NBRC 100395).